The chain runs to 107 residues: Large ribosomal subunit protein uL24 (107 aa).

Belongs to the universal ribosomal protein uL24 family. In terms of assembly, part of the 50S ribosomal subunit.

Functionally, one of two assembly initiator proteins, it binds directly to the 5'-end of the 23S rRNA, where it nucleates assembly of the 50S subunit. Its function is as follows. One of the proteins that surrounds the polypeptide exit tunnel on the outside of the subunit. This Neisseria gonorrhoeae (strain ATCC 700825 / FA 1090) protein is Large ribosomal subunit protein uL24.